A 106-amino-acid chain; its full sequence is uncharacterized protein (106 aa).

Residues 1 to 22 (MKKHPNLLLGFSVYLSAGTKLT) form the signal peptide. Residues 23–46 (IPPEAEQHTAPSDNNKRKRAKCDD) are disordered.

This is an uncharacterized protein from Arabidopsis thaliana (Mouse-ear cress).